Consider the following 306-residue polypeptide: tRNA pseudouridine synthase B (306 aa).

Catalysis depends on aspartate 47, which acts as the Nucleophile.

The protein belongs to the pseudouridine synthase TruB family. Type 1 subfamily.

It carries out the reaction uridine(55) in tRNA = pseudouridine(55) in tRNA. Functionally, responsible for synthesis of pseudouridine from uracil-55 in the psi GC loop of transfer RNAs. The sequence is that of tRNA pseudouridine synthase B from Neisseria meningitidis serogroup A / serotype 4A (strain DSM 15465 / Z2491).